The primary structure comprises 443 residues: 23S rRNA (uracil(1939)-C(5))-methyltransferase RlmD (443 aa).

In terms of domain architecture, TRAM spans 12-70 (SKQLSAKVSLQVTRLDHLGAGIAQHNGKVVFIPGVLPGEKAMVQLTEQKKRYSRAKLLN). [4Fe-4S] cluster-binding residues include Cys-83, Cys-89, Cys-92, and Cys-171. The S-adenosyl-L-methionine site is built by Gln-277, Phe-306, Asn-311, Glu-327, Asp-354, and Asp-374. The Nucleophile role is filled by Cys-400.

The protein belongs to the class I-like SAM-binding methyltransferase superfamily. RNA M5U methyltransferase family. RlmD subfamily.

It carries out the reaction uridine(1939) in 23S rRNA + S-adenosyl-L-methionine = 5-methyluridine(1939) in 23S rRNA + S-adenosyl-L-homocysteine + H(+). In terms of biological role, catalyzes the formation of 5-methyl-uridine at position 1939 (m5U1939) in 23S rRNA. The chain is 23S rRNA (uracil(1939)-C(5))-methyltransferase RlmD from Shewanella woodyi (strain ATCC 51908 / MS32).